We begin with the raw amino-acid sequence, 456 residues long: Glycosyl hydrolase family 109 protein 2 (456 aa).

The segment at residues 1 to 33 (MSGFDRRSFLKASMVTAAATALAACASSERATG) is a signal peptide (tat-type signal). NAD(+) is bound by residues 63–64 (ER), D85, 134–137 (WAWH), 154–155 (EV), and N183. Residues Y212, R231, 243–246 (YPTH), and Y325 contribute to the substrate site. Y243 contacts NAD(+).

The protein belongs to the Gfo/Idh/MocA family. Glycosyl hydrolase 109 subfamily. The cofactor is NAD(+). Predicted to be exported by the Tat system. The position of the signal peptide cleavage has not been experimentally proven.

Glycosidase. In Shewanella sp. (strain ANA-3), this protein is Glycosyl hydrolase family 109 protein 2.